Reading from the N-terminus, the 187-residue chain is Probable RNA 2'-phosphotransferase (187 aa).

It belongs to the KptA/TPT1 family.

Removes the 2'-phosphate from RNA via an intermediate in which the phosphate is ADP-ribosylated by NAD followed by a presumed transesterification to release the RNA and generate ADP-ribose 1''-2''-cyclic phosphate (APPR&gt;P). May function as an ADP-ribosylase. The polypeptide is Probable RNA 2'-phosphotransferase (Pseudomonas syringae pv. tomato (strain ATCC BAA-871 / DC3000)).